The following is a 133-amino-acid chain: Nickel-responsive regulator (133 aa).

Positions 76, 87, 89, and 95 each coordinate Ni(2+).

This sequence belongs to the transcriptional regulatory CopG/NikR family. In terms of assembly, homotetramer. Ni(2+) is required as a cofactor.

In terms of biological role, transcriptional repressor of the nikABCDE operon. Is active in the presence of excessive concentrations of intracellular nickel. The protein is Nickel-responsive regulator of Salmonella paratyphi A (strain ATCC 9150 / SARB42).